A 197-amino-acid chain; its full sequence is Probable GTP-binding protein EngB (197 aa).

The EngB-type G domain maps to 22 to 197 (TGVEVAFAGR…LKEKLDIWYQ (176 aa)). GTP contacts are provided by residues 30-37 (GRSNAGKS), 57-61 (GRTQL), 75-78 (DLPG), 142-145 (TKAD), and 177-179 (FSS). Residues serine 37 and threonine 59 each coordinate Mg(2+).

The protein belongs to the TRAFAC class TrmE-Era-EngA-EngB-Septin-like GTPase superfamily. EngB GTPase family. The cofactor is Mg(2+).

Necessary for normal cell division and for the maintenance of normal septation. This is Probable GTP-binding protein EngB from Francisella philomiragia subsp. philomiragia (strain ATCC 25017 / CCUG 19701 / FSC 153 / O#319-036).